A 378-amino-acid polypeptide reads, in one-letter code: Stimulator of interferon genes protein (378 aa).

Residues 1-17 (MPHSSLHPSIPQPRGLR) lie on the Cytoplasmic side of the membrane. The interval 1–190 (MPHSSLHPSI…IYNQFHNNTL (190 aa)) is mediates interaction with ZDHHC1 and ZDHHC11. Residues 18–34 (AQKAALVLLSACLVALW) traverse the membrane as a helical segment. At 35-44 (GLGEPPDYTL) the chain is on the lumenal side. The chain crosses the membrane as a helical span at residues 45 to 69 (KWLVLHLASQQMGLLIKGICSLAEE). The Cytoplasmic portion of the chain corresponds to 70–91 (LCHVHSRYHGSYWRAVRACLCS). The S-palmitoyl cysteine moiety is linked to residue Cys88. A helical membrane pass occupies residues 92-106 (SMRCGALLLLSCYFY). Over 107–116 (CSLPNMADLP) the chain is Lumenal. A helical membrane pass occupies residues 117 to 134 (FTWMLALLGLSQALNILL). Residues 135–378 (GLQGLAPAEV…KPLPLRSDVF (244 aa)) are Cytoplasmic-facing. Lys150 participates in a covalent cross-link: Glycyl lysine isopeptide (Lys-Gly) (interchain with G-Cter in ubiquitin). A cyclic dinucleotide-binding domain (CBD) region spans residues 153-339 (FNVAHGLAWS…LQHLRQEERE (187 aa)). Residues Ser162 and Tyr167 each contribute to the 2',3'-cGAMP site. Residues Ser162 and Tyr167 each coordinate 3',3'-c-di-GMP. 2',3'-cUAMP is bound at residue Tyr167. Lys236 participates in a covalent cross-link: Glycyl lysine isopeptide (Lys-Gly) (interchain with G-Cter in ubiquitin). 2',3'-cGAMP-binding residues include Arg238 and Thr263. 2',3'-cUAMP is bound by residues Arg238 and Thr263. 3',3'-c-di-GMP-binding positions include 238-241 (RVYT) and Thr263. Residues 339 to 378 (EVTMGSTETSVMPGSSVLSQEPELLISGLEKPLPLRSDVF) are C-terminal tail (CTT). At Ser354 the chain carries Phosphoserine. Phosphoserine; by TBK1 occurs at positions 357 and 365. Positions 362-365 (LLIS) match the pLxIS motif motif.

It belongs to the STING family. As to quaternary structure, homodimer; forms a homodimer in absence of cyclic nucleotide (c-di-GMP or cGAMP); 'Lys-63'-linked ubiquitination at Lys-150 is required for homodimerization. Homotetramer; in presence of cyclic nucleotide (c-di-GMP or cGAMP), forms tetramers and higher-order oligomers through side-by-side packing. Interacts (when phosphorylated) with IRF3; following activation and phosphorylation on the pLxIS motif by TBK1, recruits IRF3. Interacts with RIGI, MAVS and SSR2. Interacts with RNF5 and TRIM56. Interacts with TBK1; when homodimer, leading to subsequent production of IFN-beta. Interacts with IFIT1 and IFIT2. Interacts with TRIM29; this interaction induces STING1 ubiquitination and subsequent degradation. Associates with the MHC-II complex. Interacts with STEEP1; interaction takes place upon cGAMP-activation and STING1 phosphorylation by MAP3K7/TAK1 and promotes STING1 translocation to COPII vesicles. Interacts with SEC24A, SEC24B and SEC24C; promoting translocation to COPII vesicles. Interacts (when ubiquitinated) with SQSTM1; leading to relocalization to autophagosomes. Interacts with SURF4. Interacts with HNRNPA2B1. Interacts with ZDHHC1; ZDHHC1 constitutively interacts with STING1 and in presence of DNA viruses activates it by promoting its cGAMP-induced oligomerization and the recruitment of downstream signaling components. Interacts with ZDHHC11; in presence of DNA viruses promotes the recruitment of IRF3 to STING1. Interacts with TOMM70. Interacts with TAB1; promoting recruitment of TAB1 to the endoplasmic reticulum membrane and subsequent activation of MAP3K7/TAK1. Interacts (via transmembrane domain) with TMEM203. Interacts with DDX41. Phosphorylation by TBK1 leads to activation and production of IFN-beta. Following cyclic nucleotide (c-di-GMP or cGAMP)-binding, activation and translocation from the endoplasmic reticulum, STING1 is phosphorylated by TBK1 at Ser-365 in the pLxIS motif. The phosphorylated pLxIS motif constitutes an IRF3-binding motif, leading to recruitment of the transcription factor IRF3 to induce type-I interferons and other cytokines. Phosphorylated on tyrosine residues upon MHC-II aggregation. Dephosphorylation by PPP6C leads to inactivation and decreased production of IFN-beta. Phosphorylation at Ser-357 is also required to activate IRF3. Phosphorylation at Ser-354 by MAP3K7/TAK1 facilitates its interaction with STEEP1, promoting STING1 translocation to COPII vesicles. In terms of processing, ubiquitinated. Ubiquitinated via 'Lys-63'-linked ubiquitin chains in response to double-stranded DNA treatment, leading to relocalization to autophagosomes and subsequent degradation; this process is dependent on SQSTM1. 'Lys-63'-linked ubiquitination mediated by TRIM56 at Lys-150 promotes homodimerization and recruitment of the antiviral kinase TBK1 and subsequent production of IFN-beta. 'Lys-48'-linked polyubiquitination at Lys-150 occurring after viral infection is mediated by RNF5 and leads to proteasomal degradation. 'Lys-11'-linked polyubiquitination at Lys-150 by RNF26 leads to stabilize STING1: it protects STING1 from RNF5-mediated 'Lys-48'-linked polyubiquitination. 'Lys-33'-linked and 'Lys-48'-linked deubiquitinated by USP20; leading to its stabilization and promotion of innate antiviral response. 'Lys-48'-linked deubiquitinated by USP44; leading to its stabilization and promotion of innate antiviral response. 'Lys-63'-linked deubiquitinated by USP49; leading to inhibition of the subsequent recruitment of TBK1 to the signaling complex. 'Lys-63'-linked ubiquitination mediated by RNF39 promotes the activation of the cGAS-STING pathway. Post-translationally, palmitoylation takes place in the Golgi apparatus and creates a platform for the recruitment of TBK1.

It is found in the endoplasmic reticulum membrane. The protein localises to the cytoplasm. It localises to the perinuclear region. Its subcellular location is the endoplasmic reticulum-Golgi intermediate compartment membrane. The protein resides in the golgi apparatus membrane. It is found in the cytoplasmic vesicle. The protein localises to the autophagosome membrane. It localises to the mitochondrion outer membrane. Its subcellular location is the cell membrane. The catalysed reaction is H(+)(in) = H(+)(out). Its function is as follows. Facilitator of innate immune signaling that acts as a sensor of cytosolic DNA from bacteria and viruses and promotes the production of type I interferon (IFN-alpha and IFN-beta). Innate immune response is triggered in response to non-CpG double-stranded DNA from viruses and bacteria delivered to the cytoplasm. Acts by binding cyclic dinucleotides: recognizes and binds cyclic di-GMP (c-di-GMP), a second messenger produced by bacteria, cyclic UMP-AMP (2',3'-cUAMP), and cyclic GMP-AMP (cGAMP), a messenger produced by CGAS in response to DNA virus in the cytosol. Upon binding to c-di-GMP or cGAMP, STING oligomerizes, translocates from the endoplasmic reticulum and is phosphorylated by TBK1 on the pLxIS motif, leading to recruitment and subsequent activation of the transcription factor IRF3 to induce expression of type I interferon and exert a potent anti-viral state. Exhibits 2',3' phosphodiester linkage-specific ligand recognition: can bind both 2'-3' linked cGAMP (2'-3'-cGAMP) and 3'-3' linked cGAMP but is preferentially activated by 2'-3' linked cGAMP. The preference for 2'-3'-cGAMP, compared to other linkage isomers is probably due to the ligand itself, whichs adopts an organized free-ligand conformation that resembles the STING1-bound conformation and pays low energy costs in changing into the active conformation. In addition to promote the production of type I interferons, plays a direct role in autophagy. Following cGAMP-binding, STING1 buds from the endoplasmic reticulum into COPII vesicles, which then form the endoplasmic reticulum-Golgi intermediate compartment (ERGIC). The ERGIC serves as the membrane source for WIPI2 recruitment and LC3 lipidation, leading to formation of autophagosomes that target cytosolic DNA or DNA viruses for degradation by the lysosome. Promotes autophagy by acting as a proton channel that directs proton efflux from the Golgi to facilitate MAP1LC3B/LC3B lipidation. The autophagy- and interferon-inducing activities can be uncoupled and autophagy induction is independent of TBK1 phosphorylation. Autophagy is also triggered upon infection by bacteria: following c-di-GMP-binding, which is produced by live Gram-positive bacteria, promotes reticulophagy. May be involved in translocon function, the translocon possibly being able to influence the induction of type I interferons. May be involved in transduction of apoptotic signals via its association with the major histocompatibility complex class II (MHC-II). This chain is Stimulator of interferon genes protein, found in Bos taurus (Bovine).